We begin with the raw amino-acid sequence, 652 residues long: DNA ligase (652 aa).

Residues 30–34, 79–80, and glutamate 108 each bind NAD(+); these read DEVYD and SL. Lysine 110 acts as the N6-AMP-lysine intermediate in catalysis. Residues arginine 131, glutamate 165, lysine 280, and lysine 304 each coordinate NAD(+). Positions 398, 401, 414, and 419 each coordinate Zn(2+). In terms of domain architecture, BRCT spans 574-652; sequence AKENPFKGKS…DEMRSKIEQA (79 aa).

Belongs to the NAD-dependent DNA ligase family. LigA subfamily. The cofactor is Mg(2+). Requires Mn(2+) as cofactor.

It catalyses the reaction NAD(+) + (deoxyribonucleotide)n-3'-hydroxyl + 5'-phospho-(deoxyribonucleotide)m = (deoxyribonucleotide)n+m + AMP + beta-nicotinamide D-nucleotide.. Its function is as follows. DNA ligase that catalyzes the formation of phosphodiester linkages between 5'-phosphoryl and 3'-hydroxyl groups in double-stranded DNA using NAD as a coenzyme and as the energy source for the reaction. It is essential for DNA replication and repair of damaged DNA. This Sulfurimonas denitrificans (strain ATCC 33889 / DSM 1251) (Thiomicrospira denitrificans (strain ATCC 33889 / DSM 1251)) protein is DNA ligase.